A 92-amino-acid polypeptide reads, in one-letter code: Small ribosomal subunit protein uS19 (92 aa).

The protein belongs to the universal ribosomal protein uS19 family.

Protein S19 forms a complex with S13 that binds strongly to the 16S ribosomal RNA. The protein is Small ribosomal subunit protein uS19 of Lysinibacillus sphaericus (strain C3-41).